The primary structure comprises 353 residues: S-adenosylmethionine:tRNA ribosyltransferase-isomerase (353 aa).

This sequence belongs to the QueA family. As to quaternary structure, monomer.

The protein localises to the cytoplasm. It catalyses the reaction 7-aminomethyl-7-carbaguanosine(34) in tRNA + S-adenosyl-L-methionine = epoxyqueuosine(34) in tRNA + adenine + L-methionine + 2 H(+). Its pathway is tRNA modification; tRNA-queuosine biosynthesis. Its function is as follows. Transfers and isomerizes the ribose moiety from AdoMet to the 7-aminomethyl group of 7-deazaguanine (preQ1-tRNA) to give epoxyqueuosine (oQ-tRNA). The sequence is that of S-adenosylmethionine:tRNA ribosyltransferase-isomerase from Sodalis glossinidius (strain morsitans).